Reading from the N-terminus, the 462-residue chain is A-type ATP synthase subunit B (462 aa).

This sequence belongs to the ATPase alpha/beta chains family. As to quaternary structure, has multiple subunits with at least A(3), B(3), C, D, E, F, H, I and proteolipid K(x).

It localises to the cell membrane. Component of the A-type ATP synthase that produces ATP from ADP in the presence of a proton gradient across the membrane. The B chain is a regulatory subunit. In Methanococcus maripaludis (strain C7 / ATCC BAA-1331), this protein is A-type ATP synthase subunit B.